The primary structure comprises 182 residues: Biotin transporter BioY2 (182 aa).

5 consecutive transmembrane segments (helical) span residues 12–32 (IALG…IGIV), 54–74 (FFAI…FTGG), 78–98 (IAVL…MGTL), 111–131 (IPAF…GTLW), and 150–170 (PFVF…LALI).

The protein belongs to the BioY family. In terms of assembly, in E.coli forms a stable energy-coupling factor (ECF) transporter complex composed of 2 membrane-embedded substrate-binding protein (S component), 2 ATP-binding proteins (A and A' components) and 2 transmembrane proteins (T component), probably with a stoichiometry of 2:1:1:2. May be able to interact with more than 1 S component at a time.

Its subcellular location is the cell membrane. In terms of biological role, probably a biotin-binding protein that interacts with the energy-coupling factor (ECF) ABC-transporter complex. Unlike classic ABC transporters this ECF transporter provides the energy necessary to transport a number of different substrates. The substrates themselves are bound by transmembrane, not extracytoplasmic soluble proteins. The chain is Biotin transporter BioY2 (bioY2) from Lactococcus lactis subsp. cremoris (strain MG1363).